The chain runs to 107 residues: Ferredoxin (107 aa).

A propeptide spanning residues 1 to 8 is cleaved from the precursor; the sequence is MVSGVSRN. [2Fe-2S] cluster is bound by residues cysteine 45, cysteine 51, and cysteine 54.

The cofactor is [2Fe-2S] cluster.

Its subcellular location is the hydrogenosome. Functionally, ferredoxins are iron-sulfur proteins that transfer electrons in a wide variety of metabolic reactions. This chain is Ferredoxin, found in Psalteriomonas lanterna (Amoeboflagellate).